Consider the following 609-residue polypeptide: Albumin (609 aa).

A signal peptide spans 1 to 18; that stretch reads MKWVTFISLLFLFSSAYS. Positions 19 to 24 are excised as a propeptide; it reads RGVFRR. Albumin domains lie at 19 to 210, 211 to 403, and 404 to 601; these read RGVF…DELR, DEGK…EFKP, and LVEE…KLVA. Cu cation is bound at residue His27. A Phosphoserine modification is found at Ser29. Residues Glu30 and Asp37 each contribute to the Ca(2+) site. Cys77 and Cys86 are oxidised to a cystine. Phosphoserine is present on residues Ser82 and Ser89. His91 contacts Zn(2+). Intrachain disulfides connect Cys99-Cys115, Cys114-Cys125, Cys148-Cys193, Cys192-Cys201, Cys224-Cys270, and Cys269-Cys277. At Thr107 the chain carries Phosphothreonine. Lys229 bears the N6-succinyllysine mark. Lys264 provides a ligand contact to (4Z,15Z)-bilirubin IXalpha. Position 268 (Glu268) interacts with Ca(2+). The Zn(2+) site is built by His271 and Asp273. Ca(2+) contacts are provided by Asp273, Glu276, Asp279, and Asp283. Intrachain disulfides connect Cys289–Cys303, Cys302–Cys313, Cys340–Cys385, Cys384–Cys393, Cys416–Cys462, Cys461–Cys472, Cys485–Cys501, and Cys500–Cys511. Ser297 carries the phosphoserine modification. Ser443 carries the phosphoserine modification. Residues Thr444 and Thr446 each carry the phosphothreonine modification. Lys460 carries the post-translational modification N6-succinyllysine. Ser513 is subject to Phosphoserine. 2 cysteine pairs are disulfide-bonded: Cys538/Cys583 and Cys582/Cys591. Lys543 bears the N6-succinyllysine mark. At Lys558 the chain carries N6-methyllysine. A Phosphothreonine modification is found at Thr570. Lys588 carries the post-translational modification N6-succinyllysine.

This sequence belongs to the ALB/AFP/VDB family. In terms of assembly, interacts with FCGRT; this interaction regulates ALB homeostasis. Interacts with TASOR. In plasma, occurs in a covalently-linked complex with chromophore-bound alpha-1-microglobulin; this interaction does not prevent fatty acid binding to ALB. Phosphorylated by FAM20C in the extracellular medium. Plasma.

It localises to the secreted. Its function is as follows. Binds water, Ca(2+), Na(+), K(+), fatty acids, hormones, bilirubin and drugs. Its main function is the regulation of the colloidal osmotic pressure of blood. Major zinc transporter in plasma, typically binds about 80% of all plasma zinc. Major calcium and magnesium transporter in plasma, binds approximately 45% of circulating calcium and magnesium in plasma. Potentially has more than two calcium-binding sites and might additionally bind calcium in a non-specific manner. The shared binding site between zinc and calcium at residue Asp-273 suggests a crosstalk between zinc and calcium transport in the blood. The rank order of affinity is zinc &gt; calcium &gt; magnesium. Binds to the bacterial siderophore enterobactin and inhibits enterobactin-mediated iron uptake of E.coli from ferric transferrin, and may thereby limit the utilization of iron and growth of enteric bacteria such as E.coli. Does not prevent iron uptake by the bacterial siderophore aerobactin. The polypeptide is Albumin (ALB) (Pongo abelii (Sumatran orangutan)).